The chain runs to 325 residues: Hexaprenyl-diphosphate synthase large subunit ((2E,6E)-farnesyl-diphosphate specific) (325 aa).

Residues Lys-45, Arg-48, and His-77 each coordinate isopentenyl diphosphate. Residues Asp-84, Asp-88, and Arg-93 each coordinate all-trans-hexaprenyl diphosphate. Residues Asp-84 and Asp-88 each contribute to the Mg(2+) site. Arg-94 is an isopentenyl diphosphate binding site. Residues Lys-170, Thr-171, and Gln-208 each contribute to the all-trans-hexaprenyl diphosphate site.

Belongs to the FPP/GGPP synthase family. As to quaternary structure, dimer of heterodimer or heterotetramer composed of a small (Hexs-a) and large (Hexs-B) subunit. Mg(2+) serves as cofactor.

It carries out the reaction 3 isopentenyl diphosphate + (2E,6E)-farnesyl diphosphate = all-trans-hexaprenyl diphosphate + 3 diphosphate. In terms of biological role, catalyzes the condensation of three molecules of isopentenyl diphosphate with farnesyl diphosphate (FPP) to yield (all-E)-hexaprenyl diphosphate (HexPP; C30), the precursor of the prenyl side chain of menaquinone-6. Large subunit Hexs-B catalyzes the condensation reaction and the final product chain length is cooperatively regulated by both the Hexs-A and Hexs-B subunits using the whole size of the hydrophobic cleft as a ruler. The protein is Hexaprenyl-diphosphate synthase large subunit ((2E,6E)-farnesyl-diphosphate specific) (hexs-b) of Micrococcus luteus (Micrococcus lysodeikticus).